A 413-amino-acid polypeptide reads, in one-letter code: Phosphopentomutase (413 aa).

Mn(2+) contacts are provided by D11, D306, H311, D347, H348, and H359.

It belongs to the phosphopentomutase family. Requires Mn(2+) as cofactor.

Its subcellular location is the cytoplasm. The enzyme catalyses 2-deoxy-alpha-D-ribose 1-phosphate = 2-deoxy-D-ribose 5-phosphate. It carries out the reaction alpha-D-ribose 1-phosphate = D-ribose 5-phosphate. The protein operates within carbohydrate degradation; 2-deoxy-D-ribose 1-phosphate degradation; D-glyceraldehyde 3-phosphate and acetaldehyde from 2-deoxy-alpha-D-ribose 1-phosphate: step 1/2. Its function is as follows. Isomerase that catalyzes the conversion of deoxy-ribose 1-phosphate (dRib-1-P) and ribose 1-phosphate (Rib-1-P) to deoxy-ribose 5-phosphate (dRib-5-P) and ribose 5-phosphate (Rib-5-P), respectively. In Helicobacter pylori (strain HPAG1), this protein is Phosphopentomutase.